The primary structure comprises 405 residues: Argininosuccinate synthase (405 aa).

Residues 10–18 (AYSGGVDTS) and alanine 38 contribute to the ATP site. Tyrosine 89 is a binding site for L-citrulline. Position 119 (glycine 119) interacts with ATP. L-aspartate is bound by residues threonine 121, asparagine 125, and aspartate 126. Asparagine 125 provides a ligand contact to L-citrulline. Residues arginine 129, serine 177, serine 186, glutamate 262, and tyrosine 274 each coordinate L-citrulline.

It belongs to the argininosuccinate synthase family. Type 1 subfamily. Homotetramer.

The protein resides in the cytoplasm. The catalysed reaction is L-citrulline + L-aspartate + ATP = 2-(N(omega)-L-arginino)succinate + AMP + diphosphate + H(+). It participates in amino-acid biosynthesis; L-arginine biosynthesis; L-arginine from L-ornithine and carbamoyl phosphate: step 2/3. The protein is Argininosuccinate synthase of Synechococcus sp. (strain RCC307).